Here is a 340-residue protein sequence, read N- to C-terminus: HTH-type transcriptional regulator VirS (340 aa).

Residues 236 to 334 (ERVVGLARRL…GMTPRQYRAY (99 aa)) form the HTH araC/xylS-type domain. 2 DNA-binding regions (H-T-H motif) span residues 254 to 275 (EAIA…AAEG) and 301 to 324 (LSQI…RRWF).

In terms of processing, phosphorylated by PknK. Phosphorylation increases affinity for the mymA promoter.

Functionally, regulates the expression of the mymA operon. The protein is HTH-type transcriptional regulator VirS (virS) of Mycobacterium tuberculosis (strain CDC 1551 / Oshkosh).